Here is a 135-residue protein sequence, read N- to C-terminus: Meiotically up-regulated gene 116 protein (135 aa).

Residues 20–39 (YFHSFHCFFLLCFTVMLCVV) traverse the membrane as a helical segment. The interval 81-101 (QTPTKKGNKTKKKRKKEKKKE) is disordered. Basic residues predominate over residues 86–98 (KGNKTKKKRKKEK).

It localises to the mitochondrion membrane. Has a role in meiosis. The polypeptide is Meiotically up-regulated gene 116 protein (mug116) (Schizosaccharomyces pombe (strain 972 / ATCC 24843) (Fission yeast)).